The following is a 337-amino-acid chain: MKIDTSLTMPQLPEALSQAGLQFAVATEEDFDEIMAMSQDIYGGLDYLPTRYTSWLQETNRTVILARKQGKVIALESVCVIDNGETMLVEGLRVAPQERGKGVAGVLLRFCCELVKSKYPEVKVTRLTRDDQLGPKDFQKYRLITKQGILLVRFRAEDLKLRLSELNLGGDIQSSLSTSSSNTPPVRLDHTAIHRLYLTTDLMQGVLPNATIIQDWQPFKPLPSNMAILLKKDIDWMVDDVANPTMASLCTFPYRVPVGDDWYYLNIDMFGKDLDLAQQQFLCHLQRHTTTLKGHVMCQMFLDPPLWKPMAEFCNKTLSVELVKEYTEQCVVESDVV.

Residues 1 to 2 (MK) constitute a propeptide, removed in mature form. An N-acetyltransferase domain is found at 21-156 (LQFAVATEED…QGILLVRFRA (136 aa)).

The enzyme catalyses L-histidine + acetyl-CoA = N(alpha)-acetyl-L-histidine + CoA + H(+). In terms of biological role, enzyme responsible for the N-acetyl-histidine (NAH) synthesis, which is a major constituent of brain and lens of ectothermic vertebrates. The polypeptide is Histidine N-acetyltransferase (hisat) (Scomber australasicus (Blue mackerel)).